The sequence spans 265 residues: Undecaprenyl-diphosphatase (265 aa).

Transmembrane regions (helical) follow at residues 38–58 (RSDF…CLAL), 75–95 (RDYV…GLIV), 108–128 (PVAW…HFAG), 135–155 (VVTW…GVFP), 181–201 (FVFM…LLEM), 215–235 (VAVA…WLLG), and 244–264 (VFAV…PAAA).

Belongs to the UppP family.

It localises to the cell inner membrane. It catalyses the reaction di-trans,octa-cis-undecaprenyl diphosphate + H2O = di-trans,octa-cis-undecaprenyl phosphate + phosphate + H(+). In terms of biological role, catalyzes the dephosphorylation of undecaprenyl diphosphate (UPP). Confers resistance to bacitracin. The chain is Undecaprenyl-diphosphatase from Xanthomonas axonopodis pv. citri (strain 306).